A 217-amino-acid polypeptide reads, in one-letter code: 3,4-dihydroxy-2-butanone 4-phosphate synthase (217 aa).

D-ribulose 5-phosphate-binding positions include R37–E38, D42, R150–T154, and E174. E38 contacts Mg(2+). H153 is a binding site for Mg(2+).

The protein belongs to the DHBP synthase family. In terms of assembly, homodimer. Mg(2+) serves as cofactor. Requires Mn(2+) as cofactor.

It carries out the reaction D-ribulose 5-phosphate = (2S)-2-hydroxy-3-oxobutyl phosphate + formate + H(+). Its pathway is cofactor biosynthesis; riboflavin biosynthesis; 2-hydroxy-3-oxobutyl phosphate from D-ribulose 5-phosphate: step 1/1. Catalyzes the conversion of D-ribulose 5-phosphate to formate and 3,4-dihydroxy-2-butanone 4-phosphate. This is 3,4-dihydroxy-2-butanone 4-phosphate synthase from Enterobacter sp. (strain 638).